A 118-amino-acid polypeptide reads, in one-letter code: Cytochrome b-c1 complex subunit 7 (118 aa).

The igE-binding. Immunodominant epitope; induces specific IgE antibody production in mice. Causes degranulation of rat basophilic leukemia (RBL) cells and the release of beta-hexosaminidase from them stretch occupies residues 1 to 32 (MVHLTKTLRFINNPGFRKFYYGLQGYNKYGLY).

This sequence belongs to the UQCRB/QCR7 family. In terms of assembly, component of the ubiquinol-cytochrome c oxidoreductase (cytochrome b-c1 complex, complex III, CIII), a multisubunit enzyme composed of 3 respiratory subunits cytochrome b, cytochrome c1 and Rieske protein, 2 core protein subunits, and additional low-molecular weight protein subunits. The complex exists as an obligatory dimer and forms supercomplexes (SCs) in the inner mitochondrial membrane with cytochrome c oxidase (complex IV, CIV).

The protein localises to the mitochondrion inner membrane. Its function is as follows. Component of the ubiquinol-cytochrome c oxidoreductase, a multisubunit transmembrane complex that is part of the mitochondrial electron transport chain which drives oxidative phosphorylation. The respiratory chain contains 3 multisubunit complexes succinate dehydrogenase (complex II, CII), ubiquinol-cytochrome c oxidoreductase (cytochrome b-c1 complex, complex III, CIII) and cytochrome c oxidase (complex IV, CIV), that cooperate to transfer electrons derived from NADH and succinate to molecular oxygen, creating an electrochemical gradient over the inner membrane that drives transmembrane transport and the ATP synthase. The cytochrome b-c1 complex catalyzes electron transfer from ubiquinol to cytochrome c, linking this redox reaction to translocation of protons across the mitochondrial inner membrane, with protons being carried across the membrane as hydrogens on the quinol. In the process called Q cycle, 2 protons are consumed from the matrix, 4 protons are released into the intermembrane space and 2 electrons are passed to cytochrome c. The protein is Cytochrome b-c1 complex subunit 7 of Dermatophagoides farinae (American house dust mite).